The following is a 76-amino-acid chain: uncharacterized protein (76 aa).

The protein localises to the host cytoplasm. This is an uncharacterized protein from Escherichia phage Mu (Bacteriophage Mu).